The chain runs to 400 residues: 11-beta-hydroxysteroid dehydrogenase type 2 (400 aa).

Position 82–111 (82–111 (TRAVLITGCDTGFGKETAKKLDAMGFTVLA)) interacts with NAD(+). Ser-219 serves as a coordination point for substrate. Tyr-232 (proton acceptor) is an active-site residue. The segment at 378 to 400 (PGQPGPVHDTTQDPNPSPTVSAL) is disordered. Polar residues predominate over residues 389-400 (QDPNPSPTVSAL).

It belongs to the short-chain dehydrogenases/reductases (SDR) family. In terms of assembly, interacts with ligand-free cytoplasmic NR3C2. In terms of tissue distribution, highly expressed in kidney, adrenal gland and distal colon, and at much lower levels in lung, hypothalamus, hippocampus, and midbrain.

It localises to the microsome. It is found in the endoplasmic reticulum. It carries out the reaction an 11beta-hydroxysteroid + NAD(+) = an 11-oxosteroid + NADH + H(+). It catalyses the reaction corticosterone + NAD(+) = 11-dehydrocorticosterone + NADH + H(+). The enzyme catalyses 11beta,17beta-dihydroxyandrost-4-ene-3-one + NAD(+) = 17beta-hydroxyandrost-4-ene-3,11-dione + NADH + H(+). The catalysed reaction is 11beta-hydroxyandrost-4-ene-3,17-dione + NAD(+) = androst-4-ene-3,11,17-trione + NADH + H(+). It participates in steroid metabolism. With respect to regulation, inhibited by glycyrrhetinic acid. Induced by progesterone, through the Ihh signaling pathway. Catalyzes the conversion of biologically active 11beta-hydroxyglucocorticoids (11beta-hydroxysteroid) such as corticosterone, to inactive 11-ketoglucocorticoids (11-oxosteroid) such as 11-dehydrocorticosterone, in the presence of NAD(+). Functions as a dehydrogenase (oxidase), thereby decreasing the concentration of active glucocorticoids, thus protecting the nonselective mineralocorticoid receptor from occupation by glucocorticoids. Plays an important role in maintaining glucocorticoids balance during preimplantation and protects the fetus from excessive maternal corticosterone exposure. Catalyzes the oxidation of 11beta-hydroxytestosterone (11beta,17beta-dihydroxyandrost-4-ene-3-one) to 11-ketotestosterone (17beta-hydroxyandrost-4-ene-3,11-dione), a major bioactive androgen. Catalyzes the conversion of 11beta-hydroxyandrostenedione (11beta-hydroxyandrost-4-ene-3,17-dione) to 11-ketoandrostenedione (androst-4-ene-3,11,17-trione), which can be further metabolized to 11-ketotestosterone. Converts 7-beta-25-dihydroxycholesterol to 7-oxo-25-hydroxycholesterol in vitro. 7-beta-25-dihydroxycholesterol (not 7-oxo-25-hydroxycholesterol) acts as a ligand for the G-protein-coupled receptor (GPCR) Epstein-Barr virus-induced gene 2 (EBI2) and may thereby regulate immune cell migration. This is 11-beta-hydroxysteroid dehydrogenase type 2 (Hsd11b2) from Rattus norvegicus (Rat).